A 443-amino-acid polypeptide reads, in one-letter code: Signal recognition particle 54 kDa protein (443 aa).

GTP contacts are provided by residues 104–111 (GLQGSGKT), 184–188 (DTAGR), and 242–245 (TKLD).

The protein belongs to the GTP-binding SRP family. SRP54 subfamily. As to quaternary structure, part of the signal recognition particle protein translocation system, which is composed of SRP and FtsY. Archaeal SRP consists of a 7S RNA molecule of 300 nucleotides and two protein subunits: SRP54 and SRP19.

It localises to the cytoplasm. It catalyses the reaction GTP + H2O = GDP + phosphate + H(+). Functionally, involved in targeting and insertion of nascent membrane proteins into the cytoplasmic membrane. Binds to the hydrophobic signal sequence of the ribosome-nascent chain (RNC) as it emerges from the ribosomes. The SRP-RNC complex is then targeted to the cytoplasmic membrane where it interacts with the SRP receptor FtsY. This chain is Signal recognition particle 54 kDa protein, found in Methanosarcina barkeri (strain Fusaro / DSM 804).